The sequence spans 323 residues: Tetraacyldisaccharide 4'-kinase (323 aa).

Position 56–63 (56–63) interacts with ATP; the sequence is TVGGVGKT.

It belongs to the LpxK family.

It catalyses the reaction a lipid A disaccharide + ATP = a lipid IVA + ADP + H(+). The protein operates within glycolipid biosynthesis; lipid IV(A) biosynthesis; lipid IV(A) from (3R)-3-hydroxytetradecanoyl-[acyl-carrier-protein] and UDP-N-acetyl-alpha-D-glucosamine: step 6/6. Functionally, transfers the gamma-phosphate of ATP to the 4'-position of a tetraacyldisaccharide 1-phosphate intermediate (termed DS-1-P) to form tetraacyldisaccharide 1,4'-bis-phosphate (lipid IVA). The protein is Tetraacyldisaccharide 4'-kinase of Legionella pneumophila (strain Lens).